Consider the following 410-residue polypeptide: Gamma-glutamyl phosphate reductase (410 aa).

The protein belongs to the gamma-glutamyl phosphate reductase family.

Its subcellular location is the cytoplasm. The enzyme catalyses L-glutamate 5-semialdehyde + phosphate + NADP(+) = L-glutamyl 5-phosphate + NADPH + H(+). Its pathway is amino-acid biosynthesis; L-proline biosynthesis; L-glutamate 5-semialdehyde from L-glutamate: step 2/2. In terms of biological role, catalyzes the NADPH-dependent reduction of L-glutamate 5-phosphate into L-glutamate 5-semialdehyde and phosphate. The product spontaneously undergoes cyclization to form 1-pyrroline-5-carboxylate. In Campylobacter jejuni subsp. jejuni serotype O:23/36 (strain 81-176), this protein is Gamma-glutamyl phosphate reductase.